A 211-amino-acid chain; its full sequence is MSVRTKICGLSTEETVATAVRYGADYIGFVFFEKSPRSVTPEKAAMLIRQIPDHVQKMGVFVDPDNNLLERALASGLTGFQLHGHETAERIASIRETFPKVKIWKALSIANSQDLAQAPHYRGLADRLLYDARTDGVLPGGMGRRFDWRLLKEYKHPLPWALSGGLDANNIAQAVAITGAELVDISSGVETSPGIKDMDKIAQFLQAVRLL.

The protein belongs to the TrpF family.

It catalyses the reaction N-(5-phospho-beta-D-ribosyl)anthranilate = 1-(2-carboxyphenylamino)-1-deoxy-D-ribulose 5-phosphate. It participates in amino-acid biosynthesis; L-tryptophan biosynthesis; L-tryptophan from chorismate: step 3/5. The chain is N-(5'-phosphoribosyl)anthranilate isomerase from Zymomonas mobilis subsp. mobilis (strain ATCC 31821 / ZM4 / CP4).